The chain runs to 287 residues: Lycopene elongase/hydratase (287 aa).

7 helical membrane-spanning segments follow: residues 15–35, 37–57, 97–117, 137–157, 166–186, 218–238, and 265–285; these read ISWVNTAYPFGLAYLLNAGEI, WLFWLGIVFFLIPYNIAMYGI, IPFLVILFIFGTWMSSLWLTI, FIDALTSSTHFTSPALIGATI, MWIALGSFFLWGMASQILGAV, LLAAVLVTTLPNPAWIIGIAI, and VFLWLNYFVGAVITILLIAIH.

The protein belongs to the UbiA prenyltransferase family.

It localises to the cell membrane. The catalysed reaction is all-trans-lycopene + dimethylallyl diphosphate + A + H2O = nonaflavuxanthin + AH2 + diphosphate. It catalyses the reaction nonaflavuxanthin + dimethylallyl diphosphate + A + H2O = flavuxanthin + AH2 + diphosphate. It functions in the pathway carotenoid biosynthesis. Its function is as follows. Catalyzes the elongation of the C(40) carotenoid all-trans-lycopene to the acyclic C(50) carotenoid flavuxanthin during decaprenoxanthin biosynthesis. Acts as a bifunctional enzyme that catalyzes the elongation of lycopene by attaching a C(5) isoprene unit at C-2, as well as the hydroxylation of the new isoprene unit. The enzyme acts at both ends of the substrate, forming the C(50) carotenoid flavuxanthin via the C(45) intermediate nonaflavuxanthin. The polypeptide is Lycopene elongase/hydratase (Corynebacterium glutamicum (Brevibacterium saccharolyticum)).